Here is a 280-residue protein sequence, read N- to C-terminus: MAYVTMRELLEAGVHFGHQTRRWNPKMKKYIFGARNGIYIVDLQQTVKMFRDAYDFITDVTAQGKSVLFVGTKKQARDSVYEEANRAETYYVQNRWLGGMLTNFQTIKKTISRFEFLSTIENDGTIEDYPKKERVKMAKERVKLEACIGGISKMKNLPGAIFVIDPKNESIAVKEGKRLGIPIVAVVDTNCDPDDIDYVIPGNDDAIRSIRLFASKIADAAIEGHQRYLEKQNAGSDKDMDEAAFGGSAPVAAAVERTIESDGSDGPVVEMIRRKTIPAE.

This sequence belongs to the universal ribosomal protein uS2 family.

The protein is Small ribosomal subunit protein uS2 of Desulforapulum autotrophicum (strain ATCC 43914 / DSM 3382 / VKM B-1955 / HRM2) (Desulfobacterium autotrophicum).